Reading from the N-terminus, the 63-residue chain is AQIDCDKECNRRCSKASAHDRCLKYCGICCEKCHCVPPGTAGNEDVCPCYANLKNSKGGHKCP.

Belongs to the GASA family. In terms of tissue distribution, expressed in pollen (at protein level).

The sequence is that of Cypmaclein from Cupressus sempervirens (Italian cypress).